The primary structure comprises 971 residues: Oncostatin-M-specific receptor subunit beta (971 aa).

The N-terminal stretch at Met1–Ser23 is a signal peptide. At Glu24–Met737 the chain is on the extracellular side. Residues Asn74, Asn97, Asn130, Asn162, and Asn239 are each glycosylated (N-linked (GlcNAc...) asparagine). Cys242 and Cys252 are oxidised to a cystine. N-linked (GlcNAc...) asparagine glycans are attached at residues Asn271, Asn304, Asn323, and Asn377. 4 consecutive Fibronectin type-III domains span residues Ala332–Thr425, Pro427–Ser523, Gly524–Leu620, and Pro622–Ala733. Positions Trp412 to Thr416 match the WSXWS motif motif. N-linked (GlcNAc...) asparagine glycosylation is found at Asn491, Asn541, Asn577, Asn689, and Asn722. A helical membrane pass occupies residues Leu738–Trp758. The Cytoplasmic segment spans residues Lys759–Gln971. Positions Cys767–Tyr775 match the Box 1 motif motif. The disordered stretch occupies residues Leu949–Gln971. Positions Ser959–Gln971 are enriched in polar residues.

The protein belongs to the type I cytokine receptor family. Type 2 subfamily. Heterodimer composed of OSMR and IL6ST (type II OSM receptor). Heterodimer with IL31RA to form the IL31 receptor. Widely expressed. Expressed at highest levels in the lung, heart, thymus and spleen. Expressed in dorsal root ganglia.

The protein resides in the membrane. Functionally, associates with IL31RA to form the IL31 receptor. Binds IL31 to activate STAT3 and possibly STAT1 and STAT5. Capable of transducing OSM-specific signaling events. In Mus musculus (Mouse), this protein is Oncostatin-M-specific receptor subunit beta (Osmr).